Here is a 399-residue protein sequence, read N- to C-terminus: S-adenosylmethionine synthase (399 aa).

An ATP-binding site is contributed by H17. Residue D19 participates in Mg(2+) binding. E45 contacts K(+). The L-methionine site is built by E58 and Q101. A flexible loop region spans residues 101–111 (QSADIAMGVDQ). ATP contacts are provided by residues 177 to 179 (DGK), 244 to 245 (RF), D253, 259 to 260 (RK), A276, and K280. D253 provides a ligand contact to L-methionine. An L-methionine-binding site is contributed by K284.

Belongs to the AdoMet synthase family. In terms of assembly, homotetramer; dimer of dimers. Requires Mg(2+) as cofactor. It depends on K(+) as a cofactor.

Its subcellular location is the cytoplasm. The catalysed reaction is L-methionine + ATP + H2O = S-adenosyl-L-methionine + phosphate + diphosphate. Its pathway is amino-acid biosynthesis; S-adenosyl-L-methionine biosynthesis; S-adenosyl-L-methionine from L-methionine: step 1/1. In terms of biological role, catalyzes the formation of S-adenosylmethionine (AdoMet) from methionine and ATP. The overall synthetic reaction is composed of two sequential steps, AdoMet formation and the subsequent tripolyphosphate hydrolysis which occurs prior to release of AdoMet from the enzyme. This Bacillus cereus (strain G9842) protein is S-adenosylmethionine synthase.